We begin with the raw amino-acid sequence, 348 residues long: GTPase Obg (348 aa).

The region spanning M1–I159 is the Obg domain. The region spanning A160–D327 is the OBG-type G domain. GTP contacts are provided by residues G166 to S173, F191 to H195, D212 to G215, S279 to D282, and S308 to A310. Residues S173 and T193 each coordinate Mg(2+).

This sequence belongs to the TRAFAC class OBG-HflX-like GTPase superfamily. OBG GTPase family. Monomer. Requires Mg(2+) as cofactor.

It localises to the cytoplasm. Functionally, an essential GTPase which binds GTP, GDP and possibly (p)ppGpp with moderate affinity, with high nucleotide exchange rates and a fairly low GTP hydrolysis rate. Plays a role in control of the cell cycle, stress response, ribosome biogenesis and in those bacteria that undergo differentiation, in morphogenesis control. In Beijerinckia indica subsp. indica (strain ATCC 9039 / DSM 1715 / NCIMB 8712), this protein is GTPase Obg.